A 78-amino-acid polypeptide reads, in one-letter code: MTDAISLALQTGLGPVVGVIIILAMMGLTYKIAGKIPAIITGIASAFVLMFMDFLPLFWGIAIIFGLIAGMVVTRDGD.

This protein may be involved in virus assembly. Essential for virus function. This is an uncharacterized protein from Sulfolobus spindle-shape virus 1 (SSV1).